Consider the following 265-residue polypeptide: Protein N-terminal and lysine N-methyltransferase EFM7 (265 aa).

A disordered region spans residues 1–25 (MSSDHEEDSLYGATELFGEPDGFYE). Residues W67, 93 to 95 (GAA), D115, W152, and S176 contribute to the S-adenosyl-L-methionine site.

Belongs to the class I-like SAM-binding methyltransferase superfamily. EFM7 family.

The protein localises to the cytoplasm. In terms of biological role, S-adenosyl-L-methionine-dependent protein methyltransferase that trimethylates the N-terminal glycine 'Gly-2' of elongation factor 1-alpha, before also catalyzing the mono- and dimethylation of 'Lys-3'. This is Protein N-terminal and lysine N-methyltransferase EFM7 from Eremothecium gossypii (strain ATCC 10895 / CBS 109.51 / FGSC 9923 / NRRL Y-1056) (Yeast).